Reading from the N-terminus, the 98-residue chain is Small ribosomal subunit protein uS17 (98 aa).

This sequence belongs to the universal ribosomal protein uS17 family. Part of the 30S ribosomal subunit.

Its function is as follows. One of the primary rRNA binding proteins, it binds specifically to the 5'-end of 16S ribosomal RNA. This Leptothrix cholodnii (strain ATCC 51168 / LMG 8142 / SP-6) (Leptothrix discophora (strain SP-6)) protein is Small ribosomal subunit protein uS17.